The primary structure comprises 223 residues: CKLF-like MARVEL transmembrane domain-containing protein 5 (223 aa).

Residues 29 to 213 enclose the MARVEL domain; the sequence is FLTSHKGILL…DAFKIYRTEM (185 aa). 4 consecutive transmembrane segments (helical) span residues 35–55, 56–76, 162–182, and 186–206; these read GILL…FTAS, ISAY…FLFL, FLRC…AVTS, and AAIA…YDAF.

It belongs to the chemokine-like factor family. Highly expressed in the brain.

It localises to the membrane. This Homo sapiens (Human) protein is CKLF-like MARVEL transmembrane domain-containing protein 5 (CMTM5).